Reading from the N-terminus, the 282-residue chain is Tryptophan 2,3-dioxygenase (282 aa).

Residues 51 to 55, Tyr113, and Arg117 each bind substrate; that span reads FIIQH. His240 lines the heme pocket. Thr254 serves as a coordination point for substrate.

This sequence belongs to the tryptophan 2,3-dioxygenase family. As to quaternary structure, homotetramer. Requires heme as cofactor.

The enzyme catalyses L-tryptophan + O2 = N-formyl-L-kynurenine. Its pathway is amino-acid degradation; L-tryptophan degradation via kynurenine pathway; L-kynurenine from L-tryptophan: step 1/2. Functionally, heme-dependent dioxygenase that catalyzes the oxidative cleavage of the L-tryptophan (L-Trp) pyrrole ring and converts L-tryptophan to N-formyl-L-kynurenine. Catalyzes the oxidative cleavage of the indole moiety. The protein is Tryptophan 2,3-dioxygenase of Polaromonas naphthalenivorans (strain CJ2).